Reading from the N-terminus, the 421-residue chain is UDP-N-acetylglucosamine 1-carboxyvinyltransferase (421 aa).

Phosphoenolpyruvate is bound at residue 22 to 23 (KN). Arg-93 is a UDP-N-acetyl-alpha-D-glucosamine binding site. Residue Cys-117 is the Proton donor of the active site. The residue at position 117 (Cys-117) is a 2-(S-cysteinyl)pyruvic acid O-phosphothioketal. Residues 122-126 (RPVDL), Asp-308, and Val-330 contribute to the UDP-N-acetyl-alpha-D-glucosamine site.

This sequence belongs to the EPSP synthase family. MurA subfamily.

The protein localises to the cytoplasm. It catalyses the reaction phosphoenolpyruvate + UDP-N-acetyl-alpha-D-glucosamine = UDP-N-acetyl-3-O-(1-carboxyvinyl)-alpha-D-glucosamine + phosphate. The protein operates within cell wall biogenesis; peptidoglycan biosynthesis. Cell wall formation. Adds enolpyruvyl to UDP-N-acetylglucosamine. The polypeptide is UDP-N-acetylglucosamine 1-carboxyvinyltransferase (Pseudomonas paraeruginosa (strain DSM 24068 / PA7) (Pseudomonas aeruginosa (strain PA7))).